Consider the following 734-residue polypeptide: Photosystem I P700 chlorophyll a apoprotein A2 (734 aa).

Helical transmembrane passes span 46–69, 135–158, 175–199, 273–291, 330–353, 369–395, 417–439, and 517–535; these read IFAS…FHVA, LYTG…LHLQ, LNHH…HVAI, MAHH…GHMY, LHMQ…QHMY, ASLY…IFFV, AIIS…LYVH, and FLVH…LILV. Cysteine 559 and cysteine 568 together coordinate [4Fe-4S] cluster. The next 2 membrane-spanning stretches (helical) occupy residues 575-596 and 643-665; these read AFYL…YWHW and LSVW…MFLI. Chlorophyll a contacts are provided by histidine 654, methionine 662, and tyrosine 670. Position 671 (tryptophan 671) interacts with phylloquinone. A helical membrane pass occupies residues 707–727; that stretch reads LVGLAHFSVGYVLTYAAFVLA.

Belongs to the PsaA/PsaB family. As to quaternary structure, the PsaA/B heterodimer binds the P700 chlorophyll special pair and subsequent electron acceptors. PSI consists of a core antenna complex that captures photons, and an electron transfer chain that converts photonic excitation into a charge separation. The eukaryotic PSI reaction center is composed of at least 11 subunits. P700 is a chlorophyll a/chlorophyll a' dimer, A0 is one or more chlorophyll a, A1 is one or both phylloquinones and FX is a shared 4Fe-4S iron-sulfur center. serves as cofactor.

It is found in the plastid. The protein resides in the chloroplast thylakoid membrane. The catalysed reaction is reduced [plastocyanin] + hnu + oxidized [2Fe-2S]-[ferredoxin] = oxidized [plastocyanin] + reduced [2Fe-2S]-[ferredoxin]. PsaA and PsaB bind P700, the primary electron donor of photosystem I (PSI), as well as the electron acceptors A0, A1 and FX. PSI is a plastocyanin/cytochrome c6-ferredoxin oxidoreductase, converting photonic excitation into a charge separation, which transfers an electron from the donor P700 chlorophyll pair to the spectroscopically characterized acceptors A0, A1, FX, FA and FB in turn. Oxidized P700 is reduced on the lumenal side of the thylakoid membrane by plastocyanin or cytochrome c6. The polypeptide is Photosystem I P700 chlorophyll a apoprotein A2 (Porphyra purpurea (Red seaweed)).